A 267-amino-acid chain; its full sequence is Hydroxyacylglutathione hydrolase (267 aa).

His-55, His-57, Asp-59, His-60, His-121, Asp-138, and His-176 together coordinate Zn(2+).

The protein belongs to the metallo-beta-lactamase superfamily. Glyoxalase II family. Monomer. Zn(2+) is required as a cofactor.

The catalysed reaction is an S-(2-hydroxyacyl)glutathione + H2O = a 2-hydroxy carboxylate + glutathione + H(+). Its pathway is secondary metabolite metabolism; methylglyoxal degradation; (R)-lactate from methylglyoxal: step 2/2. Its function is as follows. Thiolesterase that catalyzes the hydrolysis of S-D-lactoyl-glutathione to form glutathione and D-lactic acid. The polypeptide is Hydroxyacylglutathione hydrolase (Shewanella oneidensis (strain ATCC 700550 / JCM 31522 / CIP 106686 / LMG 19005 / NCIMB 14063 / MR-1)).